Here is a 248-residue protein sequence, read N- to C-terminus: uncharacterized protein (248 aa).

A helical transmembrane segment spans residues 30–50; it reads LIALAIFIGLIAIFMFGCKAA. 2 disordered regions span residues 59–91 and 208–248; these read NRDTTQSDTDVIYPRDDPRASRSHQNFGFMDPP and TTES…VSTR. Polar residues-rich tracts occupy residues 210 to 220 and 239 to 248; these read ESPAPAQSTSN and SLHNETVSTR.

The protein resides in the membrane. This is an uncharacterized protein from Caenorhabditis elegans.